The primary structure comprises 808 residues: MDLDPNLVINHDDTNLSEISYTMEQDSSSYSLEMGGTPSSAGHRKVDMWQNHNFDSGFQTMNHSEAPSIISSLHPSSHLSGMSSMAEYEPIPNLSEQQKQKFDGITKNPTDGQYNTVRAIPELTMLMKDQDNEVVQKAVMIMQNIAKMECDAMRRQNETKIVDPCVIFTLRNLLRDKVDHPNIIRFTLGTLFNICNRQEGIDLVTRAISEQPDIIPNLIRHIGTFANSIYKYAILTMHSILSDKQRGGQSVTIARQQDAIIHVTPWLEAEKSEKLLPVIVDLIRVLCEKNTDQKVKFVKMGGPQKLLHILQQRGYENLLWRSTQLLKTFSNFDAPCLVAFGGRQILAGMLSHGSPRLVLSTLETLRNISDVPSKMKEELLLKSLLELVNSRNAVIRLYSAQTMSNLVANNRPNKEYMCSNNGVVNLCRALAIATKDWQNFQDKEAQQMEDYAESLICTLRHLCVGHPLAEKVQAYVFREPSIFLHKLMTMRPVLLKHTLNLLLKVVSQNALLAPFLLCRIGEIGFVEQLIHILRVACTQLNVQDVIEGVRVKDIVHLCIQILRLITRNPDILNEVDFFLRSPENSRMGDGHTLPIFVLQKANVEENTKSSTLELIYNLMHHEKMADHLERDEILCKMLHSVQMQAANHPELANLAANILKLMSEKRERNRIHYGRHGSFESQFGHLSVAAQRTEVLNSHGETYEGAGEQWSQPMSDDSMMESYCNSSGRDSSKTYNSPMYHSPPSMYPEYPNGPPSGPYYDPHAFTSTRPTPPHYANYDSPPVYNNIPSNQGPSSHLSDQYPYRQGRF.

Positions 1-85 are involved in transcriptional activation; the sequence is MDLDPNLVIN…SSHLSGMSSM (85 aa). ARM repeat units follow at residues 118–160, 165–209, and 369–408; these read RAIP…NETK, CVIF…RAIS, and SDVPSKMKEELLLKSLLELVNSRNAVIRLYSAQTMSNLVA. Residues 541-808 form an involved in transcriptional activation region; that stretch reads NVQDVIEGVR…DQYPYRQGRF (268 aa). The disordered stretch occupies residues 702 to 808; it reads TYEGAGEQWS…DQYPYRQGRF (107 aa). Polar residues predominate over residues 723–736; sequence YCNSSGRDSSKTYN. Low complexity predominate over residues 737-750; it reads SPMYHSPPSMYPEY. Residues 786–798 are compositionally biased toward polar residues; sequence NIPSNQGPSSHLS.

The protein belongs to the beta-catenin family. In terms of assembly, interacts with apr-1, axl-1, daf-16, lin-23, and pop-1 (via acidic region in N-terminus 1-44). Interacts (via ARM repeats) with pry-1.

It localises to the cytoplasm. The protein localises to the nucleus. The protein resides in the membrane. Its subcellular location is the cell junction. Functionally, participates in the Wnt signaling pathway which affects cell fate and may regulate the stem cell divisions of seam cells during larval development. Functions as a transcriptional activator but is dependent on the interaction with pop-1. Involved in maintaining lin-39 Hox expression and regulating glr-1 abundance at the synapses. Required for mab-5 expression during Q neuroblast migration and for oxidative stress-induced daf-16 signaling. Has roles in egg laying, vulva precursor cell fate determination, Q neuroblast migration, posterior ectodermal cell P12 specification, movement, body length, male tail development and dauer induction. Functionally redundant to wrm-1 and hmp-2. This Caenorhabditis briggsae protein is Beta-catenin/armadillo-related protein 1 (bar-1).